The chain runs to 545 residues: Membrane protein insertase YidC (545 aa).

The next 4 membrane-spanning stretches (helical) occupy residues 350-370, 424-444, 461-481, and 498-518; these read IIGN…AVLY, LPML…FASV, ADPY…QTYL, and PLVF…YWVV.

The protein belongs to the OXA1/ALB3/YidC family. Type 1 subfamily. As to quaternary structure, interacts with the Sec translocase complex via SecD. Specifically interacts with transmembrane segments of nascent integral membrane proteins during membrane integration.

Its subcellular location is the cell inner membrane. Functionally, required for the insertion and/or proper folding and/or complex formation of integral membrane proteins into the membrane. Involved in integration of membrane proteins that insert both dependently and independently of the Sec translocase complex, as well as at least some lipoproteins. Aids folding of multispanning membrane proteins. The polypeptide is Membrane protein insertase YidC (Neisseria gonorrhoeae (strain NCCP11945)).